The sequence spans 671 residues: UvrABC system protein B (671 aa).

Residues 25-412 enclose the Helicase ATP-binding domain; it reads EGIDAGLAHQ…AGRIVEQVVR (388 aa). An ATP-binding site is contributed by 38–45; sequence GVTGSGKT. The Beta-hairpin motif lies at 91-114; sequence YYDYYQPEAYVPSSDTFIEKDASI. The Helicase C-terminal domain occupies 429-582; it reads QVDDLLSEIH…QIAFNLEHGI (154 aa). Residues 601–624 form a disordered region; the sequence is PGSRSKKRKGMAKAAEENARYENE. Over residues 614–624 the composition is skewed to basic and acidic residues; sequence AAEENARYENE. The region spanning 632–667 is the UVR domain; it reads NKRIRQLEEKMYQLARDLEFEAAAQMRDEIGKLRER.

It belongs to the UvrB family. As to quaternary structure, forms a heterotetramer with UvrA during the search for lesions. Interacts with UvrC in an incision complex.

It is found in the cytoplasm. Functionally, the UvrABC repair system catalyzes the recognition and processing of DNA lesions. A damage recognition complex composed of 2 UvrA and 2 UvrB subunits scans DNA for abnormalities. Upon binding of the UvrA(2)B(2) complex to a putative damaged site, the DNA wraps around one UvrB monomer. DNA wrap is dependent on ATP binding by UvrB and probably causes local melting of the DNA helix, facilitating insertion of UvrB beta-hairpin between the DNA strands. Then UvrB probes one DNA strand for the presence of a lesion. If a lesion is found the UvrA subunits dissociate and the UvrB-DNA preincision complex is formed. This complex is subsequently bound by UvrC and the second UvrB is released. If no lesion is found, the DNA wraps around the other UvrB subunit that will check the other stand for damage. The polypeptide is UvrABC system protein B (Pseudomonas syringae pv. syringae (strain B728a)).